The following is an 82-amino-acid chain: RNA-binding protein BH0128 (82 aa).

The protein belongs to the eukaryotic ribosomal protein eL8 family.

In Halalkalibacterium halodurans (strain ATCC BAA-125 / DSM 18197 / FERM 7344 / JCM 9153 / C-125) (Bacillus halodurans), this protein is RNA-binding protein BH0128.